The following is a 338-amino-acid chain: Auxin-responsive protein IAA9 (338 aa).

The interval 1–25 (MSPEEELQSNVSVASSSPTSNCISR) is disordered. Residues 9 to 21 (SNVSVASSSPTSN) show a composition bias toward low complexity. The short motif at 68 to 72 (LTLGL) is the EAR-like (transcriptional repression) element. The tract at residues 150 to 186 (ATQSVTKKDVPQNIPKGQSSTTNNSSSPPAAKAQIVG) is disordered. Residues 168-180 (SSTTNNSSSPPAA) are compositionally biased toward low complexity. The PB1 domain occupies 216-318 (ALFVKVSMDG…VCKKLKIMKG (103 aa)).

It belongs to the Aux/IAA family. Homodimers and heterodimers. Interacts with TPL. Phosphorylated by phytochrome A in vitro. In terms of tissue distribution, highly expressed in the whole plant.

It localises to the nucleus. In terms of biological role, aux/IAA proteins are short-lived transcriptional factors that function as repressors of early auxin response genes at low auxin concentrations. Repression is thought to result from the interaction with auxin response factors (ARFs), proteins that bind to the auxin-responsive promoter element (AuxRE). Formation of heterodimers with ARF proteins may alter their ability to modulate early auxin response genes expression. The polypeptide is Auxin-responsive protein IAA9 (IAA9) (Arabidopsis thaliana (Mouse-ear cress)).